We begin with the raw amino-acid sequence, 420 residues long: 3-isopropylmalate dehydratase large subunit (420 aa).

3 residues coordinate [4Fe-4S] cluster: Cys300, Cys360, and Cys363.

The protein belongs to the aconitase/IPM isomerase family. LeuC type 2 subfamily. In terms of assembly, heterodimer of LeuC and LeuD. The cofactor is [4Fe-4S] cluster.

It catalyses the reaction (2R,3S)-3-isopropylmalate = (2S)-2-isopropylmalate. It functions in the pathway amino-acid biosynthesis; L-leucine biosynthesis; L-leucine from 3-methyl-2-oxobutanoate: step 2/4. In terms of biological role, catalyzes the isomerization between 2-isopropylmalate and 3-isopropylmalate, via the formation of 2-isopropylmaleate. The chain is 3-isopropylmalate dehydratase large subunit from Heliobacterium modesticaldum (strain ATCC 51547 / Ice1).